The sequence spans 407 residues: Na(+)-translocating NADH-quinone reductase subunit F (407 aa).

A helical transmembrane segment spans residues 3-23 (ITLGIAMFTVIVLALAVLILF). The region spanning 32–126 (GDITIEINDD…SMKIELPEEV (95 aa)) is the 2Fe-2S ferredoxin-type domain. C69, C75, C78, and C110 together coordinate [2Fe-2S] cluster. The FAD-binding FR-type domain occupies 129-269 (VKKWECTVIS…SGPFGEFFAK (141 aa)).

It belongs to the NqrF family. Composed of six subunits; NqrA, NqrB, NqrC, NqrD, NqrE and NqrF. [2Fe-2S] cluster serves as cofactor. FAD is required as a cofactor.

It is found in the cell inner membrane. It catalyses the reaction a ubiquinone + n Na(+)(in) + NADH + H(+) = a ubiquinol + n Na(+)(out) + NAD(+). Its function is as follows. NQR complex catalyzes the reduction of ubiquinone-1 to ubiquinol by two successive reactions, coupled with the transport of Na(+) ions from the cytoplasm to the periplasm. The first step is catalyzed by NqrF, which accepts electrons from NADH and reduces ubiquinone-1 to ubisemiquinone by a one-electron transfer pathway. This is Na(+)-translocating NADH-quinone reductase subunit F from Histophilus somni (strain 129Pt) (Haemophilus somnus).